A 393-amino-acid polypeptide reads, in one-letter code: S-adenosylmethionine synthase (393 aa).

Mg(2+) is bound at residue Glu-10. His-16 contributes to the ATP binding site. Position 44 (Glu-44) interacts with K(+). Residues Glu-57 and Gln-100 each contribute to the L-methionine site. ATP contacts are provided by residues 168-170, 236-239, Asp-247, 253-254, Ala-270, Lys-274, and Lys-278; these read DGK, SGRF, and RK. Asp-247 contacts L-methionine. Lys-278 is an L-methionine binding site.

This sequence belongs to the AdoMet synthase family. In terms of assembly, homotetramer. It depends on Mn(2+) as a cofactor. Mg(2+) is required as a cofactor. The cofactor is Co(2+). Requires K(+) as cofactor.

Its subcellular location is the cytoplasm. The catalysed reaction is L-methionine + ATP + H2O = S-adenosyl-L-methionine + phosphate + diphosphate. It participates in amino-acid biosynthesis; S-adenosyl-L-methionine biosynthesis; S-adenosyl-L-methionine from L-methionine: step 1/1. Catalyzes the formation of S-adenosylmethionine from methionine and ATP. The reaction comprises two steps that are both catalyzed by the same enzyme: formation of S-adenosylmethionine (AdoMet) and triphosphate, and subsequent hydrolysis of the triphosphate. This chain is S-adenosylmethionine synthase (METK), found in Musa acuminata (Banana).